A 294-amino-acid polypeptide reads, in one-letter code: Phosphatidylserine decarboxylase proenzyme (294 aa).

Residues aspartate 113, histidine 169, and serine 256 each act as charge relay system; for autoendoproteolytic cleavage activity in the active site. Catalysis depends on serine 256, which acts as the Schiff-base intermediate with substrate; via pyruvic acid; for decarboxylase activity. The residue at position 256 (serine 256) is a Pyruvic acid (Ser); by autocatalysis.

Belongs to the phosphatidylserine decarboxylase family. PSD-B subfamily. Prokaryotic type II sub-subfamily. Heterodimer of a large membrane-associated beta subunit and a small pyruvoyl-containing alpha subunit. Pyruvate serves as cofactor. Is synthesized initially as an inactive proenzyme. Formation of the active enzyme involves a self-maturation process in which the active site pyruvoyl group is generated from an internal serine residue via an autocatalytic post-translational modification. Two non-identical subunits are generated from the proenzyme in this reaction, and the pyruvate is formed at the N-terminus of the alpha chain, which is derived from the carboxyl end of the proenzyme. The autoendoproteolytic cleavage occurs by a canonical serine protease mechanism, in which the side chain hydroxyl group of the serine supplies its oxygen atom to form the C-terminus of the beta chain, while the remainder of the serine residue undergoes an oxidative deamination to produce ammonia and the pyruvoyl prosthetic group on the alpha chain. During this reaction, the Ser that is part of the protease active site of the proenzyme becomes the pyruvoyl prosthetic group, which constitutes an essential element of the active site of the mature decarboxylase.

It is found in the cell membrane. It catalyses the reaction a 1,2-diacyl-sn-glycero-3-phospho-L-serine + H(+) = a 1,2-diacyl-sn-glycero-3-phosphoethanolamine + CO2. Its pathway is phospholipid metabolism; phosphatidylethanolamine biosynthesis; phosphatidylethanolamine from CDP-diacylglycerol: step 2/2. In terms of biological role, catalyzes the formation of phosphatidylethanolamine (PtdEtn) from phosphatidylserine (PtdSer). This is Phosphatidylserine decarboxylase proenzyme from Clostridium perfringens (strain SM101 / Type A).